The chain runs to 142 residues: Universal stress protein G (142 aa).

It belongs to the universal stress protein A family.

The protein is Universal stress protein G (uspG) of Salmonella typhi.